We begin with the raw amino-acid sequence, 229 residues long: Adenylate kinase (229 aa).

A propeptide spanning residues 1–9 is cleaved from the precursor; sequence MLSTLAKRF. 25–30 serves as a coordination point for ATP; the sequence is GVGKGT. The segment at 45 to 74 is NMP; the sequence is STGDALRAEIRGQTPLGKRVKGIIESGGLV. Residues T46, R51, 72-74, 100-103, and Q107 each bind AMP; these read GLV and GIPR. The LID stretch occupies residues 141 to 178; the sequence is GRLFHPGSGRVYHKVTNPPKKPMTDDITGEPLIIRKDD. R142 serves as a coordination point for ATP. 2 residues coordinate AMP: R175 and R186. G214 contributes to the ATP binding site.

The protein belongs to the adenylate kinase family.

The protein localises to the hydrogenosome. It carries out the reaction AMP + ATP = 2 ADP. Its function is as follows. Catalyzes the reversible transfer of the terminal phosphate group between ATP and AMP. Plays an important role in cellular energy homeostasis and in adenine nucleotide metabolism. The protein is Adenylate kinase of Trichomonas vaginalis.